The chain runs to 200 residues: Ras-related protein Rab5 (200 aa).

GTP contacts are provided by residues 17 to 25 (GDMGAGKSS), 36 to 42 (LEFQEST), 65 to 69 (DTAGQ), 123 to 126 (NKAD), and 153 to 155 (SAK). An Effector region motif is present at residues 39–47 (QESTIGAAF). S-geranylgeranyl cysteine attachment occurs at residues C198 and C199.

Belongs to the small GTPase superfamily. Rab family. In terms of tissue distribution, virtually not expressed in leaves, higher in stems and roots, and highest in flowers.

Its subcellular location is the cell membrane. In terms of biological role, protein transport. Probably involved in vesicular traffic. The protein is Ras-related protein Rab5 (RAB5) of Nicotiana tabacum (Common tobacco).